The chain runs to 769 residues: Serine protease HtrA-like (769 aa).

Positions 1–20 (MDIGKKHVIPKSQYRRKRRE) are enriched in basic residues. Residues 1–390 (MDIGKKHVIP…ATSKLNKGRA (390 aa)) form a disordered region. 2 stretches are compositionally biased toward basic and acidic residues: residues 21–64 (FFHN…ERFK) and 71–108 (LEQRNRDVNENKAEESKSNQDSKSAYNRDHYLTDDVSK). Positions 126–137 (YEQNSEATLSTK) are enriched in polar residues. Residues 138–186 (STDKVESTEMRKLSSDKNKVGHEEQHVLSKPSEHDKETRIDSESSRTDS) show a composition bias toward basic and acidic residues. The segment covering 247-262 (QQSQNEQTKTYTYGDS) has biased composition (polar residues). Basic and acidic residues-rich tracts occupy residues 264-296 (QNDKSNHENDLSHHIPSISDDKDNVMRENHIVD) and 310-330 (KTDDDRKLDEKIHVEDKHKQN). A compositionally biased stretch (polar residues) spans 331-347 (ADSSETVGYQSQSTASH). A compositionally biased stretch (basic and acidic residues) spans 348 to 364 (RSTEKRNISINDHDKLN). Over residues 365 to 390 (GQKTNTKTSANNNQKKATSKLNKGRA) the composition is skewed to polar residues. Residues 410-430 (LVILMGIIILIVILNAIFNNV) traverse the membrane as a helical segment. Active-site charge relay system residues include His-504, Asp-534, and Ser-619. A PDZ domain is found at 680–733 (IVSLNSFERQAVKLPGKVKNGVVVDQVDNNGLADQSGLKKGDVITELDGKLLED).

It belongs to the peptidase S1C family.

It is found in the cell membrane. The sequence is that of Serine protease HtrA-like from Staphylococcus aureus (strain NCTC 8325 / PS 47).